The primary structure comprises 302 residues: tRNA dimethylallyltransferase (302 aa).

Residue 8 to 15 (GSSGSGKS) participates in ATP binding. 10–15 (SGSGKS) is a binding site for substrate. The interval 33–36 (DSLS) is interaction with substrate tRNA.

Belongs to the IPP transferase family. As to quaternary structure, monomer. It depends on Mg(2+) as a cofactor.

The catalysed reaction is adenosine(37) in tRNA + dimethylallyl diphosphate = N(6)-dimethylallyladenosine(37) in tRNA + diphosphate. Catalyzes the transfer of a dimethylallyl group onto the adenine at position 37 in tRNAs that read codons beginning with uridine, leading to the formation of N6-(dimethylallyl)adenosine (i(6)A). The protein is tRNA dimethylallyltransferase of Helicobacter hepaticus (strain ATCC 51449 / 3B1).